The primary structure comprises 548 residues: Chaperonin GroEL (548 aa).

Residues 30–33 (TLGP), Lys51, 87–91 (DGTTT), Gly415, 479–481 (NAA), and Asp495 contribute to the ATP site. Residues 525 to 548 (PKEDKTSDASSSPAGGMGGMGGMM) form a disordered region. A compositionally biased stretch (gly residues) spans 539–548 (GGMGGMGGMM).

This sequence belongs to the chaperonin (HSP60) family. Forms a cylinder of 14 subunits composed of two heptameric rings stacked back-to-back. Interacts with the co-chaperonin GroES.

It localises to the cytoplasm. It carries out the reaction ATP + H2O + a folded polypeptide = ADP + phosphate + an unfolded polypeptide.. Functionally, together with its co-chaperonin GroES, plays an essential role in assisting protein folding. The GroEL-GroES system forms a nano-cage that allows encapsulation of the non-native substrate proteins and provides a physical environment optimized to promote and accelerate protein folding. The sequence is that of Chaperonin GroEL from Buchnera aphidicola subsp. Rhopalosiphum padi.